Here is an 87-residue protein sequence, read N- to C-terminus: U15-lycotoxin-Ls1f (87 aa).

The signal sequence occupies residues 1–20 (MNSKIFAVLLLLGLLSCVLS). One can recognise a WAP domain in the interval 21 to 66 (DQYCPKSSITACKKMNIRNDCCKDDDCTGGSWCCATPCGNFCKYPT). Disulfide bonds link Cys24-Cys54, Cys32-Cys58, Cys41-Cys53, Cys42-Cys80, and Cys47-Cys62.

It belongs to the venom protein 11 family. 01 (wap-1) subfamily. Post-translationally, contains 5 disulfide bonds. In terms of tissue distribution, expressed by the venom gland.

Its subcellular location is the secreted. In terms of biological role, has antibacterial activity. This Lycosa singoriensis (Wolf spider) protein is U15-lycotoxin-Ls1f.